The following is a 109-amino-acid chain: Oncomodulin (109 aa).

Ser2 carries the post-translational modification N-acetylserine. 2 EF-hand domains span residues 39-74 (MSAS…FQSD) and 78-109 (LTES…MVHS). 10 residues coordinate Ca(2+): Asp52, Asp54, Ser56, Tyr58, Glu63, Asp91, Asp93, Asp95, Lys97, and Glu102. Residues 82–109 (ETKSLMDAADNDGDGKIGADEFQEMVHS) are disordered. A compositionally biased stretch (basic and acidic residues) spans 94-109 (GDGKIGADEFQEMVHS).

The protein belongs to the parvalbumin family. Found in tumor tissues and not detected in normal tissues.

Its function is as follows. Has some calmodulin-like activity with respect to enzyme activation and growth regulation. Binds two calcium ions. The chain is Oncomodulin (Ocm) from Mus musculus (Mouse).